The chain runs to 138 residues: Isochorismatase-like protein asqB (138 aa).

It belongs to the isochorismatase family.

It catalyses the reaction [(1'E)-5'-(3',3'-dimethyloxiran-2'-yl)-3'-hydroxy-3'-methylpent-1'-en-1'-yl]-quinolinone B = yaequinolone C. The protein operates within secondary metabolite biosynthesis. It participates in alkaloid biosynthesis. It functions in the pathway mycotoxin biosynthesis. Functionally, isochorismatase-like protein; part of the gene cluster that mediates the biosynthesis of the aspoquinolone mycotoxins. Within the pathway, asqB converts [(1'E)-5'-(3',3'-dimethyloxiran-2'-yl)-3'-hydroxy-3'-methylpent-1'-en-1'-yl]-quinolinone B into yaequinolone C. The first step of the pathway is catalyzed by the nonribosomal peptide synthetase asqK that condenses anthranilic acid and O-methyl-L-tyrosine to produce 4'-methoxycyclopeptin. 4'-methoxycyclopeptin is then converted to 4'-methoxydehydrocyclopeptin by the ketoglutarate-dependent dioxygenase asqJ. AsqJ also converts its first product 4'-methoxydehydrocyclopeptin to 4'-methoxycyclopenin. The following conversion of 4'-methoxycyclopenin into 4'-methoxyviridicatin is catalyzed by the cyclopenase asqI. 4'-methoxyviridicatin is the precursor of quinolone natural products, and is further converted to quinolinone B. The prenyltransferase asqH1 then catalyzes the canonical Friedel-Crafts alkylation of quinolinone B with dimethylallyl cation to yield dimethylallyl quinolone, which is subjected to FAD-dependent dehydrogenation by the FAD-linked oxidoreductase asqF to yield conjugated aryl diene. The delta(3') double bond then serves as the site of the second alkylation with DMAPP catalyzed by the prenyltransferase asqH2 to yield a carbenium ion intermediate, which can be attacked by H(2)O to yield a styrenyl quinolone containing a C3'-hydroxyprenyl chain. The FAD-dependent monooxygenase asqG performs epoxidation of the terminal C7'-C8' olefin. Finally, after dehydratation of the epoxide at C3 by asqC, the quinolone epoxide rearrangement protein asqO catalyzes an enzymatic 3-exo-tet cyclization to yield the cyclopropyl-THF ring system in aspoquinolone. The sequence is that of Isochorismatase-like protein asqB from Emericella nidulans (strain FGSC A4 / ATCC 38163 / CBS 112.46 / NRRL 194 / M139) (Aspergillus nidulans).